The following is a 94-amino-acid chain: Co-chaperonin GroES (94 aa).

This sequence belongs to the GroES chaperonin family. In terms of assembly, heptamer of 7 subunits arranged in a ring. Interacts with the chaperonin GroEL.

It localises to the cytoplasm. Its function is as follows. Together with the chaperonin GroEL, plays an essential role in assisting protein folding. The GroEL-GroES system forms a nano-cage that allows encapsulation of the non-native substrate proteins and provides a physical environment optimized to promote and accelerate protein folding. GroES binds to the apical surface of the GroEL ring, thereby capping the opening of the GroEL channel. The sequence is that of Co-chaperonin GroES from Clostridium beijerinckii (strain ATCC 51743 / NCIMB 8052) (Clostridium acetobutylicum).